We begin with the raw amino-acid sequence, 312 residues long: Large ribosomal subunit protein uL10 (312 aa).

Residue K14 forms a Glycyl lysine isopeptide (Lys-Gly) (interchain with G-Cter in ubiquitin) linkage. At S68 the chain carries Phosphoserine. Residues K97 and K144 each participate in a glycyl lysine isopeptide (Lys-Gly) (interchain with G-Cter in ubiquitin) cross-link. The interval 199 to 230 is interaction with P1A-P2B; sequence SSILDITDEELVSHFVSAVSTIASISLAIGYP. The tract at residues 231 to 258 is interaction with P1B-P2A; it reads TLPSVGHTLINNYKDLLAVAIAASYHYP. Residues 278–293 are compositionally biased toward low complexity; sequence PAATSAASGDAAPAEE. The interval 278 to 312 is disordered; sequence PAATSAASGDAAPAEEAAAEEEEESDDDMGFGLFD. Residues 294 to 306 are compositionally biased toward acidic residues; it reads AAAEEEEESDDDM. S302 carries the post-translational modification Phosphoserine; by CK2.

The protein belongs to the universal ribosomal protein uL10 family. In terms of assembly, component of the large ribosomal subunit (LSU). Mature yeast ribosomes consist of a small (40S) and a large (60S) subunit. The 40S small subunit contains 1 molecule of ribosomal RNA (18S rRNA) and 33 different proteins (encoded by 57 genes). The large 60S subunit contains 3 rRNA molecules (25S, 5.8S and 5S rRNA) and 46 different proteins (encoded by 81 genes). The 5 acidic ribosomal P-proteins form the stalk structure of the 60S subunit. They are organized as a pentameric complex in which uL10/P0 interacts with 2 heterodimers, P1A-P2B and P1B-P2A. uL10 directly interacts with 28S rRNA. uL10 interacts with YFL034W.

It localises to the cytoplasm. In terms of biological role, component of the ribosome, a large ribonucleoprotein complex responsible for the synthesis of proteins in the cell. The small ribosomal subunit (SSU) binds messenger RNAs (mRNAs) and translates the encoded message by selecting cognate aminoacyl-transfer RNA (tRNA) molecules. The large subunit (LSU) contains the ribosomal catalytic site termed the peptidyl transferase center (PTC), which catalyzes the formation of peptide bonds, thereby polymerizing the amino acids delivered by tRNAs into a polypeptide chain. The nascent polypeptides leave the ribosome through a tunnel in the LSU and interact with protein factors that function in enzymatic processing, targeting, and the membrane insertion of nascent chains at the exit of the ribosomal tunnel. uL10 forms part of the P stalk that participates in recruiting G proteins to the ribosome. This is Large ribosomal subunit protein uL10 from Saccharomyces cerevisiae (strain ATCC 204508 / S288c) (Baker's yeast).